A 282-amino-acid chain; its full sequence is Sulfur carrier protein FdhD (282 aa).

Cys115 acts as the Cysteine persulfide intermediate in catalysis.

The protein belongs to the FdhD family.

Its subcellular location is the cytoplasm. In terms of biological role, required for formate dehydrogenase (FDH) activity. Acts as a sulfur carrier protein that transfers sulfur from IscS to the molybdenum cofactor prior to its insertion into FDH. The protein is Sulfur carrier protein FdhD of Streptomyces coelicolor (strain ATCC BAA-471 / A3(2) / M145).